The primary structure comprises 144 residues: Large ribosomal subunit protein uL13 (144 aa).

It belongs to the universal ribosomal protein uL13 family. Part of the 50S ribosomal subunit.

This protein is one of the early assembly proteins of the 50S ribosomal subunit, although it is not seen to bind rRNA by itself. It is important during the early stages of 50S assembly. The polypeptide is Large ribosomal subunit protein uL13 (Clostridium kluyveri (strain NBRC 12016)).